We begin with the raw amino-acid sequence, 144 residues long: MRALIQRVLEAKVEVDGQTTGEIKKGLLVFLGLGKEDTLEKGQKLIDKILKYRIFDDEQGKMGWNVSQANGGVLLVSQFTLMAQTQKGLRPDFGPAMPPSDAKALYEQLVEYTRSQFENVQTGIFAADMKVHLINDGPVTFNLT.

Residues G137–P138 carry the Gly-cisPro motif, important for rejection of L-amino acids motif.

This sequence belongs to the DTD family. In terms of assembly, homodimer.

It is found in the cytoplasm. It catalyses the reaction glycyl-tRNA(Ala) + H2O = tRNA(Ala) + glycine + H(+). It carries out the reaction a D-aminoacyl-tRNA + H2O = a tRNA + a D-alpha-amino acid + H(+). In terms of biological role, an aminoacyl-tRNA editing enzyme that deacylates mischarged D-aminoacyl-tRNAs. Also deacylates mischarged glycyl-tRNA(Ala), protecting cells against glycine mischarging by AlaRS. Acts via tRNA-based rather than protein-based catalysis; rejects L-amino acids rather than detecting D-amino acids in the active site. By recycling D-aminoacyl-tRNA to D-amino acids and free tRNA molecules, this enzyme counteracts the toxicity associated with the formation of D-aminoacyl-tRNA entities in vivo and helps enforce protein L-homochirality. The protein is D-aminoacyl-tRNA deacylase of Acinetobacter baumannii (strain SDF).